A 258-amino-acid chain; its full sequence is uncharacterized protein (258 aa).

3 Solcar repeats span residues 9–78 (KPIL…AKAR), 81–160 (PGVR…FKKK), and 165–246 (DHVF…VKSH). 6 consecutive transmembrane segments (helical) span residues 11–31 (ILVGGLSGLVAETLVFPLSTI), 53–73 (GLSSVLVSTLPSASSFFFVYE), 87–107 (LVSASVAEVVSCGILAPAEVV), 139–159 (MCGRNVPATAFQFVLYEQFKK), 171–191 (PKGAALSGAITAAVLTPLDVI), and 218–239 (FEKGLGLRVFASSLGLSIYLGT).

It belongs to the mitochondrial carrier (TC 2.A.29) family.

It localises to the mitochondrion inner membrane. This is an uncharacterized protein from Schizosaccharomyces pombe (strain 972 / ATCC 24843) (Fission yeast).